A 502-amino-acid chain; its full sequence is Alpha-ketoglutarate-dependent dioxygenase FTO (502 aa).

Residues 32-324 (TPKDDEFYQQ…SSTHRVAECS (293 aa)) are fe2OG dioxygenase domain. Residues Arg-96 and Tyr-108 each contribute to the substrate site. Asn-202 serves as a coordination point for 2-oxoglutarate. Residues 210–221 (PYLKEEPYFGMG) are loop L1; predicted to block binding of double-stranded DNA or RNA. Residue Lys-213 is modified to N6-acetyllysine. Fe cation is bound by residues His-228 and Asp-230. Substrate is bound at residue 228 to 231 (HHDE). Tyr-292 provides a ligand contact to 2-oxoglutarate. Position 304 (His-304) interacts with Fe cation. 2-oxoglutarate contacts are provided by residues 313 to 315 (RFS), Thr-317, and Arg-319.

This sequence belongs to the fto family. Monomer. May also exist as homodimer. Requires Fe(2+) as cofactor. As to expression, ubiquitous. Highly expressed in teeth and weakly in bone.

It is found in the nucleus. The protein localises to the nucleus speckle. The protein resides in the cytoplasm. The catalysed reaction is a 5'-end (N(7)-methyl 5'-triphosphoguanosine)-(N(6),2'-O-dimethyladenosine) in mRNA + 2-oxoglutarate + O2 = a 5'-end (N(7)-methyl 5'-triphosphoguanosine)-(2'-O-methyladenosine) in mRNA + formaldehyde + succinate + CO2. The enzyme catalyses an N(6)-methyladenosine in mRNA + 2-oxoglutarate + O2 = an adenosine in mRNA + formaldehyde + succinate + CO2. It catalyses the reaction N(6)-methyladenosine in U6 snRNA + 2-oxoglutarate + O2 = adenosine in U6 snRNA + formaldehyde + succinate + CO2. It carries out the reaction a 5'-end (N(7)-methyl 5'-triphosphoguanosine)-(N(6),2'-O-dimethyladenosine) in U6 snRNA + 2-oxoglutarate + O2 = a 5'-end (N(7)-methyl 5'-triphosphoguanosine)-(2'-O-methyladenosine) in U6 snRNA + formaldehyde + succinate + CO2. The catalysed reaction is an N(1)-methyladenosine in tRNA + 2-oxoglutarate + O2 = an adenosine in tRNA + formaldehyde + succinate + CO2. With respect to regulation, activated by ascorbate. Inhibited by N-oxalylglycine, fumarate and succinate. Its function is as follows. RNA demethylase that mediates oxidative demethylation of different RNA species, such as mRNAs, tRNAs and snRNAs, and acts as a regulator of fat mass, adipogenesis and energy homeostasis. Specifically demethylates N(6)-methyladenosine (m6A) RNA, the most prevalent internal modification of messenger RNA (mRNA) in higher eukaryotes. M6A demethylation by FTO affects mRNA expression and stability. Also able to demethylate m6A in U6 small nuclear RNA (snRNA). Mediates demethylation of N(6),2'-O-dimethyladenosine cap (m6A(m)), by demethylating the N(6)-methyladenosine at the second transcribed position of mRNAs and U6 snRNA. Demethylation of m6A(m) in the 5'-cap by FTO affects mRNA stability by promoting susceptibility to decapping. Also acts as a tRNA demethylase by removing N(1)-methyladenine from various tRNAs. Has no activity towards 1-methylguanine. Has no detectable activity towards double-stranded DNA. Also able to repair alkylated DNA and RNA by oxidative demethylation: demethylates single-stranded RNA containing 3-methyluracil, single-stranded DNA containing 3-methylthymine and has low demethylase activity towards single-stranded DNA containing 1-methyladenine or 3-methylcytosine. Ability to repair alkylated DNA and RNA is however unsure in vivo. Involved in the regulation of fat mass, adipogenesis and body weight, thereby contributing to the regulation of body size and body fat accumulation. Involved in the regulation of thermogenesis and the control of adipocyte differentiation into brown or white fat cells. Regulates activity of the dopaminergic midbrain circuitry via its ability to demethylate m6A in mRNAs. The polypeptide is Alpha-ketoglutarate-dependent dioxygenase FTO (Rattus norvegicus (Rat)).